The primary structure comprises 736 residues: Acyl-coenzyme A oxidase (736 aa).

This sequence belongs to the acyl-CoA oxidase family. It depends on FAD as a cofactor.

The protein localises to the peroxisome. It carries out the reaction a 2,3-saturated acyl-CoA + O2 = a (2E)-enoyl-CoA + H2O2. The protein operates within lipid metabolism; peroxisomal fatty acid beta-oxidation. The protein is Acyl-coenzyme A oxidase (POX1) of Kluyveromyces lactis (strain ATCC 8585 / CBS 2359 / DSM 70799 / NBRC 1267 / NRRL Y-1140 / WM37) (Yeast).